The chain runs to 494 residues: Ceramide glucosyltransferase (494 aa).

Topologically, residues 1-6 (MPLLMD) are lumenal. Residues 7–27 (GLAYAGAIWSLIVFCVQAIGL) form a helical membrane-spanning segment. Residues 28-337 (YQLFRSYSRP…VRWLRVRKWT (310 aa)) are Cytoplasmic-facing. Position 95 (D95) is a short sequence motif, D1. D160 is a short sequence motif (D2). Residue D285 is a short sequence motif, D3. The active-site Proton acceptor is the D285. The short motif at 326–330 (RRVRW) is the (Q/R)XXRW element. The chain crosses the membrane as a helical span at residues 338–358 (VLLATLVEPGVESMVCCMAFA). Over 359–380 (HALTTTPWCPNPADWPIPHTWT) the chain is Lumenal. The chain crosses the membrane as a helical span at residues 381-401 (ALWSIWLAAIAVWATLDYVVY). The Cytoplasmic segment spans residues 402 to 428 (HFLHSCRSIEKDADSPDFAQGNELMKR). A helical membrane pass occupies residues 429 to 449 (PFGAWILAWIGREILALPIWT). At 450–494 (RAVLLGTTVTWRGTKFKVRPDQSVVDIPNAGAKSNGIGSTNRKVR) the chain is on the lumenal side.

Belongs to the glycosyltransferase 2 family.

Its subcellular location is the golgi apparatus membrane. It carries out the reaction an N-acylsphing-4-enine + UDP-alpha-D-glucose = a beta-D-glucosyl-(1&lt;-&gt;1')-N-acylsphing-4-enine + UDP + H(+). It participates in lipid metabolism; sphingolipid metabolism. Catalyzes the final step in the biosynthesis of the membrane lipid glucosylceramide (GluCer), the transfer of glucose to ceramide. Glucosylceramides play important roles in growth, differentiation and pathogenicity. The sequence is that of Ceramide glucosyltransferase from Pyricularia oryzae (strain 70-15 / ATCC MYA-4617 / FGSC 8958) (Rice blast fungus).